Consider the following 461-residue polypeptide: ATP-dependent protease ATPase subunit HslU (461 aa).

ATP-binding positions include Ile-18, 60–65 (GVGKTE), Asp-274, Glu-339, and Arg-411.

The protein belongs to the ClpX chaperone family. HslU subfamily. As to quaternary structure, a double ring-shaped homohexamer of HslV is capped on each side by a ring-shaped HslU homohexamer. The assembly of the HslU/HslV complex is dependent on binding of ATP.

It is found in the cytoplasm. Its function is as follows. ATPase subunit of a proteasome-like degradation complex; this subunit has chaperone activity. The binding of ATP and its subsequent hydrolysis by HslU are essential for unfolding of protein substrates subsequently hydrolyzed by HslV. HslU recognizes the N-terminal part of its protein substrates and unfolds these before they are guided to HslV for hydrolysis. The polypeptide is ATP-dependent protease ATPase subunit HslU (Carboxydothermus hydrogenoformans (strain ATCC BAA-161 / DSM 6008 / Z-2901)).